Consider the following 351-residue polypeptide: dTDP-glucose 4,6-dehydratase (351 aa).

NAD(+) contacts are provided by residues 12–13 (FI), 32–35 (DALT), 58–59 (DI), 80–84 (FAAES), and Thr99. Ser84 lines the substrate pocket. Thr133 contributes to the substrate binding site. Residue Asp134 is the Proton donor of the active site. Residues Glu135 and Tyr158 each act as proton acceptor in the active site. 158-162 (YSASK) is an NAD(+) binding site. Asn187 provides a ligand contact to substrate. Residue Asn188 participates in NAD(+) binding. Residues 197-198 (KL), 213-215 (PVY), Arg222, Asn257, and 289-293 (DRPGH) each bind substrate.

Belongs to the NAD(P)-dependent epimerase/dehydratase family. dTDP-glucose dehydratase subfamily. In terms of assembly, homodimer. The cofactor is NAD(+).

The catalysed reaction is dTDP-alpha-D-glucose = dTDP-4-dehydro-6-deoxy-alpha-D-glucose + H2O. The protein operates within carbohydrate biosynthesis; dTDP-L-rhamnose biosynthesis. It participates in bacterial outer membrane biogenesis; LPS O-antigen biosynthesis. Catalyzes the dehydration of dTDP-D-glucose to form dTDP-6-deoxy-D-xylo-4-hexulose via a three-step process involving oxidation, dehydration and reduction. The protein is dTDP-glucose 4,6-dehydratase (rfbB) of Xanthomonas campestris pv. campestris (strain ATCC 33913 / DSM 3586 / NCPPB 528 / LMG 568 / P 25).